Consider the following 37-residue polypeptide: Omega-conotoxin-like S6.7 (37 aa).

Positions 1–4 are excised as a propeptide; the sequence is KSTS. 3 disulfides stabilise this stretch: cysteine 5–cysteine 20, cysteine 12–cysteine 23, and cysteine 19–cysteine 32.

The protein belongs to the conotoxin O1 superfamily. Expressed by the venom duct.

It localises to the secreted. In terms of biological role, omega-conotoxins act at presynaptic membranes, they bind and block voltage-gated calcium channels (Cav). This toxin blocks N-, P- and Q-type calcium channels. The sequence is that of Omega-conotoxin-like S6.7 from Conus striatus (Striated cone).